Consider the following 430-residue polypeptide: Enolase (430 aa).

A (2R)-2-phosphoglycerate-binding site is contributed by glutamine 163. Residue glutamate 205 is the Proton donor of the active site. Mg(2+) contacts are provided by aspartate 242, glutamate 288, and aspartate 315. The (2R)-2-phosphoglycerate site is built by lysine 340, arginine 369, serine 370, and lysine 391. Lysine 340 (proton acceptor) is an active-site residue.

It belongs to the enolase family. Mg(2+) serves as cofactor.

It is found in the cytoplasm. Its subcellular location is the secreted. The protein localises to the cell surface. It carries out the reaction (2R)-2-phosphoglycerate = phosphoenolpyruvate + H2O. Its pathway is carbohydrate degradation; glycolysis; pyruvate from D-glyceraldehyde 3-phosphate: step 4/5. Its function is as follows. Catalyzes the reversible conversion of 2-phosphoglycerate (2-PG) into phosphoenolpyruvate (PEP). It is essential for the degradation of carbohydrates via glycolysis. This chain is Enolase, found in Phytoplasma australiense.